The primary structure comprises 179 residues: Large ribosomal subunit protein uL5 (179 aa).

The protein belongs to the universal ribosomal protein uL5 family. Part of the 50S ribosomal subunit; part of the 5S rRNA/L5/L18/L25 subcomplex. Contacts the 5S rRNA and the P site tRNA. Forms a bridge to the 30S subunit in the 70S ribosome.

Its function is as follows. This is one of the proteins that bind and probably mediate the attachment of the 5S RNA into the large ribosomal subunit, where it forms part of the central protuberance. In the 70S ribosome it contacts protein S13 of the 30S subunit (bridge B1b), connecting the 2 subunits; this bridge is implicated in subunit movement. Contacts the P site tRNA; the 5S rRNA and some of its associated proteins might help stabilize positioning of ribosome-bound tRNAs. This is Large ribosomal subunit protein uL5 from Desulfotalea psychrophila (strain LSv54 / DSM 12343).